Consider the following 303-residue polypeptide: Methionyl-tRNA formyltransferase (303 aa).

108 to 111 (SDLP) is a (6S)-5,6,7,8-tetrahydrofolate binding site.

Belongs to the Fmt family.

The enzyme catalyses L-methionyl-tRNA(fMet) + (6R)-10-formyltetrahydrofolate = N-formyl-L-methionyl-tRNA(fMet) + (6S)-5,6,7,8-tetrahydrofolate + H(+). Its function is as follows. Attaches a formyl group to the free amino group of methionyl-tRNA(fMet). The formyl group appears to play a dual role in the initiator identity of N-formylmethionyl-tRNA by promoting its recognition by IF2 and preventing the misappropriation of this tRNA by the elongation apparatus. In Rickettsia canadensis (strain McKiel), this protein is Methionyl-tRNA formyltransferase.